We begin with the raw amino-acid sequence, 193 residues long: MAVMIKKSDFLGIPSEEYRGILSLRYQVFKRRLEWDLVSEDNLESDEYDNSNAEYIYACDDAEEVNGCWRLLPTTGDYMLKTVFPELLGDQVAPRDPNIVELSRFAVGKNSSKINNSASEITMKLFQAIYKHAVSQGITEYVTVTSIAIERFLKRIKVPCHRIGDKEIHLLGNTRSVVLSMPINDQFRKAVSN.

This sequence belongs to the autoinducer synthase family.

The catalysed reaction is a fatty acyl-[ACP] + S-adenosyl-L-methionine = an N-acyl-L-homoserine lactone + S-methyl-5'-thioadenosine + holo-[ACP] + H(+). Required for the synthesis of OHHL (N-(3-oxohexanoyl)-L-homoserine lactone) also known as VAI or N-(beta-ketocaproyl)homoserine lactone or 3-oxo-N-(tetrahydro-2-oxo-3-furanyl)-hexanamide, an autoinducer molecule which binds to LuxR and thus acts in bioluminescence regulation. The protein is Acyl-homoserine-lactone synthase (luxI) of Aliivibrio fischeri (strain ATCC 700601 / ES114) (Vibrio fischeri).